A 222-amino-acid polypeptide reads, in one-letter code: GEM-like protein 4 (222 aa).

In terms of domain architecture, GRAM spans 95-173; that stretch reads KIFKRLFRVS…CKIDRVNQSQ (79 aa).

The protein belongs to the GEM family.

This chain is GEM-like protein 4, found in Arabidopsis thaliana (Mouse-ear cress).